The chain runs to 190 residues: UPF0725 protein At2g20625 (190 aa).

This sequence belongs to the UPF0725 (EMB2204) family.

The chain is UPF0725 protein At2g20625 from Arabidopsis thaliana (Mouse-ear cress).